We begin with the raw amino-acid sequence, 367 residues long: Peptide chain release factor 1 (367 aa).

The residue at position 238 (Q238) is an N5-methylglutamine.

The protein belongs to the prokaryotic/mitochondrial release factor family. Post-translationally, methylated by PrmC. Methylation increases the termination efficiency of RF1.

Its subcellular location is the cytoplasm. Functionally, peptide chain release factor 1 directs the termination of translation in response to the peptide chain termination codons UAG and UAA. The protein is Peptide chain release factor 1 of Dictyoglomus thermophilum (strain ATCC 35947 / DSM 3960 / H-6-12).